Consider the following 53-residue polypeptide: Small, acid-soluble spore protein K (53 aa).

The disordered stretch occupies residues 1–53 (MRNKEHNFPNQNNNKFEGEPRAKSEYASKRADGTTNTHPQERMRASGERSDFF). 2 stretches are compositionally biased toward basic and acidic residues: residues 16-32 (FEGE…KRAD) and 39-53 (PQER…SDFF).

Belongs to the SspK family.

The protein localises to the spore core. This is Small, acid-soluble spore protein K from Geobacillus thermodenitrificans (strain NG80-2).